A 2360-amino-acid polypeptide reads, in one-letter code: Protein Ycf2 (2360 aa).

Disordered stretches follow at residues 172–193, 225–255, and 944–995; these read SSQL…GTED, TEIE…EMNN, and KRKK…KRKE. Residues 234–244 are compositionally biased toward low complexity; sequence KGLSGSSSKSR. A compositionally biased stretch (basic and acidic residues) spans 245-254; that stretch reads LFTEGEKEMN. A compositionally biased stretch (basic residues) spans 944-959; the sequence is KRKKKKPEKRKKKKPE. Residues 960–993 show a composition bias toward basic and acidic residues; that stretch reads KRKEKKPEKRKEKKPEKRKEKKPEKRKEKKPEKR. 1425–1432 is a binding site for ATP; it reads GSIGSGRS. Disordered regions lie at residues 1499–1518, 1843–2031, and 2098–2214; these read YEDR…YEPG, LVGS…LLRP, and PAEE…DGFS. The span at 1849–2011 shows a compositional bias: acidic residues; the sequence is TEEEVEGTEE…VEGTEDEEVE (163 aa). Basic and acidic residues predominate over residues 2012–2024; sequence GTEKDSSQFDNDR. 2 stretches are compositionally biased toward acidic residues: residues 2098–2115 and 2122–2197; these read PAEE…EALE and GEEE…ENDS.

It belongs to the Ycf2 family.

The protein resides in the plastid. Its subcellular location is the chloroplast stroma. In terms of biological role, probable ATPase of unknown function. Its presence in a non-photosynthetic plant (Epifagus virginiana) and experiments in tobacco indicate that it has an essential function which is probably not related to photosynthesis. The sequence is that of Protein Ycf2 from Oenothera argillicola (Appalachian evening primrose).